The chain runs to 262 residues: ATP synthase subunit a (262 aa).

5 helical membrane passes run 26-46 (VHID…FVFS), 86-106 (VAPL…IDLI), 130-150 (DISA…FYTI), 204-226 (LIFI…GIPL), and 240-260 (LQAF…YNKA).

The protein belongs to the ATPase A chain family. As to quaternary structure, F-type ATPases have 2 components, CF(1) - the catalytic core - and CF(0) - the membrane proton channel. CF(1) has five subunits: alpha(3), beta(3), gamma(1), delta(1), epsilon(1). CF(0) has three main subunits: a(1), b(2) and c(9-12). The alpha and beta chains form an alternating ring which encloses part of the gamma chain. CF(1) is attached to CF(0) by a central stalk formed by the gamma and epsilon chains, while a peripheral stalk is formed by the delta and b chains.

The protein localises to the cell inner membrane. In terms of biological role, key component of the proton channel; it plays a direct role in the translocation of protons across the membrane. The chain is ATP synthase subunit a from Haemophilus influenzae (strain 86-028NP).